Consider the following 138-residue polypeptide: Translation initiation factor 2 subunit beta (138 aa).

It belongs to the eIF-2-beta/eIF-5 family. As to quaternary structure, heterotrimer composed of an alpha, a beta and a gamma chain.

Functionally, eIF-2 functions in the early steps of protein synthesis by forming a ternary complex with GTP and initiator tRNA. In Methanococcus maripaludis (strain C5 / ATCC BAA-1333), this protein is Translation initiation factor 2 subunit beta.